The following is a 314-amino-acid chain: tRNA-cytidine(32) 2-sulfurtransferase (314 aa).

The PP-loop motif signature appears at Ser39–Ser44. Residues Cys114, Cys117, and Cys205 each contribute to the [4Fe-4S] cluster site.

The protein belongs to the TtcA family. As to quaternary structure, homodimer. Requires Mg(2+) as cofactor. The cofactor is [4Fe-4S] cluster.

The protein localises to the cytoplasm. The enzyme catalyses cytidine(32) in tRNA + S-sulfanyl-L-cysteinyl-[cysteine desulfurase] + AH2 + ATP = 2-thiocytidine(32) in tRNA + L-cysteinyl-[cysteine desulfurase] + A + AMP + diphosphate + H(+). The protein operates within tRNA modification. In terms of biological role, catalyzes the ATP-dependent 2-thiolation of cytidine in position 32 of tRNA, to form 2-thiocytidine (s(2)C32). The sulfur atoms are provided by the cysteine/cysteine desulfurase (IscS) system. This is tRNA-cytidine(32) 2-sulfurtransferase from Cupriavidus necator (strain ATCC 17699 / DSM 428 / KCTC 22496 / NCIMB 10442 / H16 / Stanier 337) (Ralstonia eutropha).